The following is a 90-amino-acid chain: RNA-binding protein Hfq (90 aa).

Positions 9–68 (DPFLNALRRERVPVSIYLVNGIKLQGQVESFDQFVILLKNTVSQMVYKHAISTVVPARPF) constitute a Sm domain.

It belongs to the Hfq family. In terms of assembly, homohexamer.

In terms of biological role, RNA chaperone that binds small regulatory RNA (sRNAs) and mRNAs to facilitate mRNA translational regulation in response to envelope stress, environmental stress and changes in metabolite concentrations. Also binds with high specificity to tRNAs. The protein is RNA-binding protein Hfq of Shewanella baltica (strain OS155 / ATCC BAA-1091).